Here is a 299-residue protein sequence, read N- to C-terminus: ATP phosphoribosyltransferase (299 aa).

Belongs to the ATP phosphoribosyltransferase family. Long subfamily. In terms of assembly, equilibrium between an active dimeric form, an inactive hexameric form and higher aggregates. Interconversion between the various forms is largely reversible and is influenced by the natural substrates and inhibitors of the enzyme. Mg(2+) serves as cofactor.

The protein resides in the cytoplasm. The catalysed reaction is 1-(5-phospho-beta-D-ribosyl)-ATP + diphosphate = 5-phospho-alpha-D-ribose 1-diphosphate + ATP. The protein operates within amino-acid biosynthesis; L-histidine biosynthesis; L-histidine from 5-phospho-alpha-D-ribose 1-diphosphate: step 1/9. Its activity is regulated as follows. Feedback inhibited by histidine. In terms of biological role, catalyzes the condensation of ATP and 5-phosphoribose 1-diphosphate to form N'-(5'-phosphoribosyl)-ATP (PR-ATP). Has a crucial role in the pathway because the rate of histidine biosynthesis seems to be controlled primarily by regulation of HisG enzymatic activity. The chain is ATP phosphoribosyltransferase from Escherichia coli O81 (strain ED1a).